Consider the following 217-residue polypeptide: FMN-dependent NADH:quinone oxidoreductase (217 aa).

Residues serine 10, 17-19 (SAS), and 137-140 (SRGG) each bind FMN.

Belongs to the azoreductase type 1 family. Homodimer. Requires FMN as cofactor.

It catalyses the reaction 2 a quinone + NADH + H(+) = 2 a 1,4-benzosemiquinone + NAD(+). The catalysed reaction is N,N-dimethyl-1,4-phenylenediamine + anthranilate + 2 NAD(+) = 2-(4-dimethylaminophenyl)diazenylbenzoate + 2 NADH + 2 H(+). In terms of biological role, quinone reductase that provides resistance to thiol-specific stress caused by electrophilic quinones. Functionally, also exhibits azoreductase activity. Catalyzes the reductive cleavage of the azo bond in aromatic azo compounds to the corresponding amines. This chain is FMN-dependent NADH:quinone oxidoreductase, found in Streptomyces avermitilis (strain ATCC 31267 / DSM 46492 / JCM 5070 / NBRC 14893 / NCIMB 12804 / NRRL 8165 / MA-4680).